A 270-amino-acid chain; its full sequence is MAASSSGEKEKERMGGVSGMTGLGSTRERLLSALEDLEVLSRELIEMLAISRNQKLLQLEEENQVLELLIHRDGDFQELMKLALNQGKVHHEMQALEKEVEKRDSDIQQLQKQLKEAEQILATAVYQAKEKLKSIEKARKGAISSEEIIKYAHRISASNAVCAPLTWVPGDPRRPYPTDLEMRSGLLGQMNNPSTSGVNGHLPGDALAAGRLPDVLAPQYPWQSNDMSVNMLPPNHSTDFLLEPPGHNKENEDDVEVMSTDSSSSSSDSD.

The disordered stretch occupies residues 1–22; it reads MAASSSGEKEKERMGGVSGMTG. Ala2 carries the post-translational modification N-acetylalanine. Positions 26-131 form a coiled coil; that stretch reads TRERLLSALE…ATAVYQAKEK (106 aa). Ser32 is modified (phosphoserine). The interval 227-270 is disordered; sequence MSVNMLPPNHSTDFLLEPPGHNKENEDDVEVMSTDSSSSSSDSD. Residues 259 to 270 show a composition bias toward low complexity; sequence STDSSSSSSDSD.

It belongs to the Mediator complex subunit 4 family. As to quaternary structure, component of the Mediator complex, which is composed of MED1, MED4, MED6, MED7, MED8, MED9, MED10, MED11, MED12, MED13, MED13L, MED14, MED15, MED16, MED17, MED18, MED19, MED20, MED21, MED22, MED23, MED24, MED25, MED26, MED27, MED29, MED30, MED31, CCNC, CDK8 and CDC2L6/CDK11. The MED12, MED13, CCNC and CDK8 subunits form a distinct module termed the CDK8 module. Mediator containing the CDK8 module is less active than Mediator lacking this module in supporting transcriptional activation. Individual preparations of the Mediator complex lacking one or more distinct subunits have been variously termed ARC, CRSP, DRIP, PC2, SMCC and TRAP.

The protein resides in the nucleus. Functionally, component of the Mediator complex, a coactivator involved in the regulated transcription of nearly all RNA polymerase II-dependent genes. Mediator functions as a bridge to convey information from gene-specific regulatory proteins to the basal RNA polymerase II transcription machinery. Mediator is recruited to promoters by direct interactions with regulatory proteins and serves as a scaffold for the assembly of a functional preinitiation complex with RNA polymerase II and the general transcription factors. This chain is Mediator of RNA polymerase II transcription subunit 4 (Med4), found in Rattus norvegicus (Rat).